Reading from the N-terminus, the 209-residue chain is 3-demethoxyubiquinol 3-hydroxylase (209 aa).

Residues Glu-58, Glu-88, His-91, Glu-140, Glu-172, and His-175 each coordinate Fe cation.

This sequence belongs to the COQ7 family. Fe cation is required as a cofactor.

It is found in the cell membrane. It catalyses the reaction a 5-methoxy-2-methyl-3-(all-trans-polyprenyl)benzene-1,4-diol + AH2 + O2 = a 3-demethylubiquinol + A + H2O. The protein operates within cofactor biosynthesis; ubiquinone biosynthesis. Its function is as follows. Catalyzes the hydroxylation of 2-nonaprenyl-3-methyl-6-methoxy-1,4-benzoquinol during ubiquinone biosynthesis. This Polynucleobacter asymbioticus (strain DSM 18221 / CIP 109841 / QLW-P1DMWA-1) (Polynucleobacter necessarius subsp. asymbioticus) protein is 3-demethoxyubiquinol 3-hydroxylase.